Here is a 329-residue protein sequence, read N- to C-terminus: Sideroflexin-1.1 (329 aa).

5 helical membrane-spanning segments follow: residues 100–122, 150–167, 178–198, 232–254, and 274–294; these read MPGN…GVVF, LFVS…VALG, LAAR…NIPM, VTLS…MNRI, and IQTL…CALF.

Belongs to the sideroflexin family.

It is found in the mitochondrion inner membrane. It catalyses the reaction L-serine(in) = L-serine(out). The catalysed reaction is L-alanine(in) = L-alanine(out). The enzyme catalyses L-cysteine(in) = L-cysteine(out). Amino acid transporter importing serine, an essential substrate of the mitochondrial branch of the one-carbon pathway, into mitochondria. Mitochondrial serine is then converted to glycine and formate, which exits to the cytosol where it is used to generate the charged folates that serve as one-carbon donors. May also transport other amino acids including alanine and cysteine. The sequence is that of Sideroflexin-1.1 from Caenorhabditis elegans.